A 148-amino-acid polypeptide reads, in one-letter code: Urease accessory protein UreE (148 aa).

This sequence belongs to the UreE family.

Its subcellular location is the cytoplasm. Involved in urease metallocenter assembly. Binds nickel. Probably functions as a nickel donor during metallocenter assembly. In Geobacillus kaustophilus (strain HTA426), this protein is Urease accessory protein UreE.